Here is a 264-residue protein sequence, read N- to C-terminus: Phosphatidylglycerol--prolipoprotein diacylglyceryl transferase (264 aa).

Helical transmembrane passes span 14 to 34 (VGPL…LLFM), 57 to 77 (LLLY…VLFF), 89 to 109 (ILAI…VLVA), 127 to 147 (FIAP…FING), 176 to 196 (QLYQ…VYSA), 202 to 222 (KAVS…AEFF), and 235 to 255 (LGLS…VGLL). Arginine 140 lines the a 1,2-diacyl-sn-glycero-3-phospho-(1'-sn-glycerol) pocket.

The protein belongs to the Lgt family.

It localises to the cell inner membrane. It catalyses the reaction L-cysteinyl-[prolipoprotein] + a 1,2-diacyl-sn-glycero-3-phospho-(1'-sn-glycerol) = an S-1,2-diacyl-sn-glyceryl-L-cysteinyl-[prolipoprotein] + sn-glycerol 1-phosphate + H(+). It functions in the pathway protein modification; lipoprotein biosynthesis (diacylglyceryl transfer). In terms of biological role, catalyzes the transfer of the diacylglyceryl group from phosphatidylglycerol to the sulfhydryl group of the N-terminal cysteine of a prolipoprotein, the first step in the formation of mature lipoproteins. The polypeptide is Phosphatidylglycerol--prolipoprotein diacylglyceryl transferase (Aromatoleum aromaticum (strain DSM 19018 / LMG 30748 / EbN1) (Azoarcus sp. (strain EbN1))).